The primary structure comprises 200 residues: Charged multivesicular body protein 6-B (200 aa).

Gly2 is lipidated: N-myristoyl glycine. Residues 9–102 adopt a coiled-coil conformation; it reads RRSRVTEQDK…FAQIEMKVIE (94 aa). Residues 165–200 are disordered; sequence QEDLELPEAPSEPLSDTVPEKQAVKNRPKPQLVAAS. A Type-2 MIT-interacting motif motif is present at residues 168–179; it reads LELPEAPSEPLS.

The protein belongs to the SNF7 family. Probable core component of the endosomal sorting required for transport complex III (ESCRT-III). ESCRT-III components are thought to multimerize to form a flat lattice on the perimeter membrane of the endosome.

The protein resides in the endomembrane system. It is found in the late endosome membrane. Probable core component of the endosomal sorting required for transport complex III (ESCRT-III) which is involved in multivesicular bodies (MVBs) formation and sorting of endosomal cargo proteins into MVBs. MVBs contain intraluminal vesicles (ILVs) that are generated by invagination and scission from the limiting membrane of the endosome and mostly are delivered to lysosomes enabling degradation of membrane proteins, such as stimulated growth factor receptors, lysosomal enzymes and lipids. In the ESCRT-III complex, it probably serves as an acceptor for the ESCRT-II complex on endosomal membranes. The polypeptide is Charged multivesicular body protein 6-B (chmp6-b) (Xenopus laevis (African clawed frog)).